We begin with the raw amino-acid sequence, 81 residues long: Xenopsin peptides (81 aa).

Residues 1 to 20 (MYKGIFLCVLLAVICANSLA) form the signal peptide. Positions 21–37 (TPSSDADEDNDEVERYV) are excised as a propeptide. Residues 65-73 (EAMLRSAEA) constitute a propeptide, removed in mature form by a dipeptidylpeptidase.

This sequence belongs to the gastrin/cholecystokinin family. Magainin subfamily. As to expression, XPF is synthesized in the stomach and stored in a novel granular multinucleated cell in the gastric mucosa, it is stored as active, processed peptides in large granules within the granular gland secretions of the skin.

It localises to the secreted. In terms of biological role, xenopsin is a neurotensin-like octapeptide. Its function is as follows. XPF has antimicrobial activity. This Xenopus laevis (African clawed frog) protein is Xenopsin peptides.